We begin with the raw amino-acid sequence, 936 residues long: Protein SIEL (936 aa).

As to quaternary structure, interacts with SHR, MGP, SCR, JKD, CPC, TMO7 and AGL21, but not with LFY or STM.

It localises to the nucleus. The protein resides in the endosome. Its subcellular location is the cytoplasm. The protein localises to the cell cortex. Its function is as follows. Intracellular shuttle that promotes movement of SHR from the stele into the endodermis. Required for SHR association to endosomes and localization, and for intercellular movement of SHR. In Arabidopsis thaliana (Mouse-ear cress), this protein is Protein SIEL.